Here is a 105-residue protein sequence, read N- to C-terminus: Integration host factor (105 aa).

The short motif at 64-71 (LPKVGKVK) is the H2TH motif, binds DNA element. Positions 82–94 (APTRRLRGLGDRQ) are lid, binds DNA.

It belongs to the actinobacterial IHF (aIHF) family. Homodimer in solution. Binds DNA as a monomer.

The protein localises to the cytoplasm. Its function is as follows. A nucleoid-associated protein (NAP) required for septum formation and normal cell division as well as for DNA segregation. Binds about 135 sites across the chromosome, most of which are genes involved in virulence; most DNA-binding sites are immediately upstream of transcription start sites. When mIHF is depleted most of the genes are down-regulated. Binds supercoiled and linear dsDNA in a concentration-dependent manner, probably non-sequence specifically. Binding compacts DNA, protecting it from degradation. Initial binding to supercoiled DNA opens it fully, followed by bending and compaction. Bends and thus compacts linear DNA. Binds DNA via 2 sites, forms left-handed loops on linear DNA; at low concentrations unwinds larger cosmids (42.6 kb) then collapses and condenses DNA as protein levels rise. Forms mostly left-handed loops on condensing cosmid DNA. The chain is Integration host factor from Mycobacterium tuberculosis (strain ATCC 25618 / H37Rv).